We begin with the raw amino-acid sequence, 533 residues long: DnaJ homolog subfamily C member 21 (533 aa).

A J domain is found at 3 to 70 (CHYEALGVRR…ERAWYDNHRE (68 aa)). Disordered regions lie at residues 278-311 (QFGDGSGEDEAEDQELRDGQDGKDSDEAEDAELY), 327-473 (KAMR…RVPA), and 503-533 (KATGHARAPSSSTSLNSVTNSRNKKEKRKNR). Phosphoserine is present on residues Ser-283 and Ser-302. Positions 291–302 (QELRDGQDGKDS) are enriched in basic and acidic residues. A C2H2-type 1 zinc finger spans residues 315-339 (YCPACDKSFKTEKAMRNHEKSKKHR). Residues 357 to 369 (SGPQTDENSLNAN) show a composition bias toward polar residues. The residue at position 370 (Ser-370) is a Phosphoserine. Residues 381–392 (KLSRKQKKKKQK) show a composition bias toward basic residues. Residues 393 to 403 (PAQNYDDNFNE) show a composition bias toward polar residues. Positions 455-464 (SKPKGKKAKD) are enriched in basic residues. A C2H2-type 2 zinc finger spans residues 484 to 508 (SCTTCHSEFPSRNKLFDHLKATGHA). Ser-512 is modified (phosphoserine). Low complexity predominate over residues 512 to 523 (SSSTSLNSVTNS). Positions 524-533 (RNKKEKRKNR) are enriched in basic residues.

In terms of assembly, interacts with HSPA8, PA2G4 and ZNF622.

The protein resides in the cytoplasm. It localises to the nucleus. It is found in the nucleolus. Its function is as follows. May act as a co-chaperone for HSP70. May play a role in ribosomal RNA (rRNA) biogenesis, possibly in the maturation of the 60S subunit. Binds the precursor 45S rRNA. This chain is DnaJ homolog subfamily C member 21 (DNAJC21), found in Bos taurus (Bovine).